Reading from the N-terminus, the 303-residue chain is Ribose-5-phosphate isomerase (303 aa).

A compositionally biased stretch (gly residues) spans 22 to 33 (AGGAASGGGGNN). Residues 22 to 75 (AGGAASGGGGNNWGLSGSHVQLPGRAHSETRGDKGGSSAGGPAPSTMSKAEEAK) are disordered. Omega-N-methylarginine is present on Arg-52. Ser-99 carries the post-translational modification Phosphoserine.

Belongs to the ribose 5-phosphate isomerase family. Widely expressed, with highest levels in testis.

The catalysed reaction is aldehydo-D-ribose 5-phosphate = D-ribulose 5-phosphate. It participates in carbohydrate degradation; pentose phosphate pathway; D-ribose 5-phosphate from D-ribulose 5-phosphate (non-oxidative stage): step 1/1. The polypeptide is Ribose-5-phosphate isomerase (Rpia) (Mus musculus (Mouse)).